A 754-amino-acid chain; its full sequence is 1,4-alpha-glucan branching enzyme GlgB (754 aa).

D431 (nucleophile) is an active-site residue. Catalysis depends on E484, which acts as the Proton donor.

This sequence belongs to the glycosyl hydrolase 13 family. GlgB subfamily. In terms of assembly, monomer.

The enzyme catalyses Transfers a segment of a (1-&gt;4)-alpha-D-glucan chain to a primary hydroxy group in a similar glucan chain.. It participates in glycan biosynthesis; glycogen biosynthesis. In terms of biological role, catalyzes the formation of the alpha-1,6-glucosidic linkages in glycogen by scission of a 1,4-alpha-linked oligosaccharide from growing alpha-1,4-glucan chains and the subsequent attachment of the oligosaccharide to the alpha-1,6 position. This is 1,4-alpha-glucan branching enzyme GlgB from Prochlorococcus marinus subsp. pastoris (strain CCMP1986 / NIES-2087 / MED4).